Here is a 498-residue protein sequence, read N- to C-terminus: U4/U6 small nuclear ribonucleoprotein Prp31 (498 aa).

The disordered stretch occupies residues 1 to 24; that stretch reads MSLADELLADLEEAAEEEEENLID. Residues 7 to 24 are compositionally biased toward acidic residues; the sequence is LLADLEEAAEEEEENLID. Coiled-coil stretches lie at residues 84 to 119 and 180 to 214; these read EAAP…KYSK and DEEL…MSFI. The Nop domain maps to 214–332; sequence IAPNLSIIVG…IERKFDKWQE (119 aa). The disordered stretch occupies residues 333–356; sequence PPPVKQVKPLPAPLDGQRKKRGGR. Positions 350–363 match the Nuclear localization signal (NLS) motif; sequence RKKRGGRRYRKMKE.

It belongs to the PRP31 family. As to quaternary structure, identified in the spliceosome B complex. Component of the U4/U6-U5 tri-snRNP complex. Component of some MLL1/MLL complex.

It is found in the nucleus. Its subcellular location is the nucleus speckle. The protein localises to the cajal body. Involved in pre-mRNA splicing as component of the spliceosome. Required for the assembly of the U4/U5/U6 tri-snRNP complex, one of the building blocks of the spliceosome. In Xenopus laevis (African clawed frog), this protein is U4/U6 small nuclear ribonucleoprotein Prp31 (prpf31).